An 86-amino-acid polypeptide reads, in one-letter code: Large ribosomal subunit protein eL43 (86 aa).

The C4-type zinc finger occupies 38 to 59; sequence CPVCGRKAVRRISTGIWQCQKC.

The protein belongs to the eukaryotic ribosomal protein eL43 family. It depends on Zn(2+) as a cofactor.

The chain is Large ribosomal subunit protein eL43 from Thermococcus onnurineus (strain NA1).